A 216-amino-acid chain; its full sequence is GTP-binding nuclear protein spi1 (216 aa).

A Small GTPase Ran-type domain is found at 6–170 (NVPTFKLVLV…LWLARKLVGN (165 aa)). 17–24 (DGGTGKTT) contacts GTP. Thr-20 bears the Phosphothreonine mark. The segment at 36–44 (KKYIATLGV) is switch-I. GTP contacts are provided by residues Gly-67, 121-124 (NKVD), and 149-151 (SAK). The interval 67–83 (GQEKLGGLRDGYYIQGQ) is switch-II.

It belongs to the small GTPase superfamily. Ran family. In terms of assembly, oligomer of dis3, pim1 and spi1. Found in a nuclear export complex with RanGTP, exportin and pre-miRNA. Interacts with fft3.

It is found in the nucleus. Functionally, GTP-binding protein involved in nucleocytoplasmic transport. Required for the import of protein into the nucleus and also for RNA export. The sequence is that of GTP-binding nuclear protein spi1 (spi1) from Schizosaccharomyces pombe (strain 972 / ATCC 24843) (Fission yeast).